A 459-amino-acid polypeptide reads, in one-letter code: Ribulose bisphosphate carboxylase large chain (459 aa).

The residue at position 4 (lysine 4) is an N6,N6,N6-trimethyllysine. Substrate-binding residues include asparagine 113 and threonine 163. The active-site Proton acceptor is the lysine 165. Lysine 167 is a substrate binding site. Mg(2+) contacts are provided by lysine 191, aspartate 193, and glutamate 194. Lysine 191 carries the N6-carboxylysine modification. Histidine 284 functions as the Proton acceptor in the catalytic mechanism. Substrate contacts are provided by arginine 285, histidine 317, and serine 369.

This sequence belongs to the RuBisCO large chain family. Type I subfamily. As to quaternary structure, heterohexadecamer of 8 large chains and 8 small chains; disulfide-linked. The disulfide link is formed within the large subunit homodimers. Requires Mg(2+) as cofactor. The disulfide bond which can form in the large chain dimeric partners within the hexadecamer appears to be associated with oxidative stress and protein turnover.

The protein resides in the plastid. It is found in the chloroplast. The catalysed reaction is 2 (2R)-3-phosphoglycerate + 2 H(+) = D-ribulose 1,5-bisphosphate + CO2 + H2O. It carries out the reaction D-ribulose 1,5-bisphosphate + O2 = 2-phosphoglycolate + (2R)-3-phosphoglycerate + 2 H(+). In terms of biological role, ruBisCO catalyzes two reactions: the carboxylation of D-ribulose 1,5-bisphosphate, the primary event in carbon dioxide fixation, as well as the oxidative fragmentation of the pentose substrate in the photorespiration process. Both reactions occur simultaneously and in competition at the same active site. In Cephalotus follicularis (Albany pitcher plant), this protein is Ribulose bisphosphate carboxylase large chain.